A 409-amino-acid chain; its full sequence is Argininosuccinate synthase (409 aa).

Residues 11-19 (AYSGGLDTS) and A38 each bind ATP. L-citrulline contacts are provided by Y91 and S96. An ATP-binding site is contributed by G121. L-aspartate-binding residues include T123, N127, and D128. N127 is an L-citrulline binding site. L-citrulline is bound by residues R131, S182, S191, E267, and Y279.

The protein belongs to the argininosuccinate synthase family. Type 1 subfamily. In terms of assembly, homotetramer.

It is found in the cytoplasm. The enzyme catalyses L-citrulline + L-aspartate + ATP = 2-(N(omega)-L-arginino)succinate + AMP + diphosphate + H(+). It functions in the pathway amino-acid biosynthesis; L-arginine biosynthesis; L-arginine from L-ornithine and carbamoyl phosphate: step 2/3. In Nitrobacter hamburgensis (strain DSM 10229 / NCIMB 13809 / X14), this protein is Argininosuccinate synthase.